Reading from the N-terminus, the 92-residue chain is DNA/RNA-binding protein Alba (92 aa).

Lys-11 bears the N6-acetyllysine mark.

The protein belongs to the histone-like Alba family. Acetylated. Acetylation at Lys-11 decreases DNA-binding affinity.

It localises to the cytoplasm. Its subcellular location is the chromosome. Functionally, binds double-stranded DNA tightly but without sequence specificity. Involved in DNA compaction. This chain is DNA/RNA-binding protein Alba, found in Pyrobaculum islandicum (strain DSM 4184 / JCM 9189 / GEO3).